A 72-amino-acid chain; its full sequence is Beta-defensin 104 (72 aa).

Residues M1–S22 form the signal peptide. Disulfide bonds link C30–C57, C37–C51, and C41–C58.

It belongs to the beta-defensin family. As to expression, high expression in the testis. Gastric antrum exhibited relatively high levels. A lower expression is observed in uterus and neutrophils thyroid gland, lung, and kidney. No detectable expression in other tissues tested.

It is found in the secreted. In terms of biological role, has antimicrobial activity. Synergistic effects with lysozyme and DEFB103. The polypeptide is Beta-defensin 104 (DEFB104A) (Homo sapiens (Human)).